A 165-amino-acid polypeptide reads, in one-letter code: UPF0254 protein MmarC6_1720 (165 aa).

It belongs to the UPF0254 family.

This is UPF0254 protein MmarC6_1720 from Methanococcus maripaludis (strain C6 / ATCC BAA-1332).